A 702-amino-acid chain; its full sequence is Elongation factor G (702 aa).

The tr-type G domain maps to aspartate 8–leucine 286. GTP contacts are provided by residues alanine 17–threonine 24, aspartate 85–histidine 89, and asparagine 139–aspartate 142.

This sequence belongs to the TRAFAC class translation factor GTPase superfamily. Classic translation factor GTPase family. EF-G/EF-2 subfamily.

It is found in the cytoplasm. Functionally, catalyzes the GTP-dependent ribosomal translocation step during translation elongation. During this step, the ribosome changes from the pre-translocational (PRE) to the post-translocational (POST) state as the newly formed A-site-bound peptidyl-tRNA and P-site-bound deacylated tRNA move to the P and E sites, respectively. Catalyzes the coordinated movement of the two tRNA molecules, the mRNA and conformational changes in the ribosome. The sequence is that of Elongation factor G from Chloroflexus aggregans (strain MD-66 / DSM 9485).